The following is a 108-amino-acid chain: Competence protein ComGC (108 aa).

An N-terminal signal peptide occupies residues methionine 1 to valine 13. A may be involved in polymerization of ComGC region spans residues lysine 14–leucine 39. Phenylalanine 16 carries the N-methylphenylalanine modification. A helical membrane pass occupies residues phenylalanine 16–valine 36.

The protein belongs to the ComGC family. In terms of assembly, the transformation pili are flexible filaments, consisting mainly of the major pilin ComGC and smaller amounts of the minor pilins, including at least ComGD, ComGF and ComGG, and perhaps ComGE. Homodimer. Forms higher-order multimers. Interacts with ComGG; the interaction is probably direct. Undergoes proteolytic cleavage.

The protein resides in the cell membrane. It localises to the cell surface. It is found in the fimbrium. The protein localises to the secreted. Major component of the type IV-like pilus (T4P) that plays a role in transformation. Transformation pili are dynamically extended and retracted, perhaps thereby promoting DNA uptake and transformation. Required for transformation. Required for DNA binding. In Streptococcus pneumoniae (strain ATCC BAA-255 / R6), this protein is Competence protein ComGC.